The following is a 188-amino-acid chain: MSAREERYQRGSKRPAARRENESDNGSWEQADLGNEERKQKFLRLMGAGKKEHTGRLVIGDHKSTSHFRSGVEDKKISDQLEHQYQQSMDSSMSGRNRRHCGLGFSESETTQEKAPPPPPEHPPERESESESSNEVSSEEESESESVSEEETAADKQKPTKPNEKDSFPDSRDGKSNYKMLFVKSTGS.

Residues 1–188 form a disordered region; the sequence is MSAREERYQR…KMLFVKSTGS (188 aa). Residues 49 to 82 show a composition bias toward basic and acidic residues; sequence GKKEHTGRLVIGDHKSTSHFRSGVEDKKISDQLE. The span at 83 to 95 shows a compositional bias: polar residues; sequence HQYQQSMDSSMSG. Acidic residues predominate over residues 130-152; that stretch reads SESSNEVSSEEESESESVSEEET. Residues 153-176 show a composition bias toward basic and acidic residues; the sequence is AADKQKPTKPNEKDSFPDSRDGKS.

The protein belongs to the SMAP family.

This is Small acidic protein (smap) from Xenopus laevis (African clawed frog).